A 385-amino-acid polypeptide reads, in one-letter code: Glucans biosynthesis protein C (385 aa).

The next 10 helical transmembrane spans lie at 17–37 (AWLMLLGIPFHISLIYSSHTW), 60–80 (MQVFFVISGYFSYMLFLRYPL), 91–111 (VGIPMLTAIPLLTLPQFIMLQ), 137–157 (ISHLWFLLVLVVMTTLCVWIF), 173–193 (KFSMVKLSVIFLCLGIGYAVI), 212–232 (FIVMQTLFYLPFFILGALAFI), 239–259 (LFTTPSRGCTLAAALAFVAYL), 274–294 (TESVITMVLGLWMVNVVFSFG), 311–331 (ASLFIYLVHHPLTLFFGAYIT), and 338–358 (WLGFLCGLIFVVGIAIILYEI).

Belongs to the acyltransferase 3 family. OpgC subfamily.

It localises to the cell membrane. The protein operates within glycan metabolism; osmoregulated periplasmic glucan (OPG) biosynthesis. Necessary for the succinyl substitution of periplasmic glucans. Could catalyze the transfer of succinyl residues from the cytoplasmic side of the membrane to the nascent glucan backbones on the periplasmic side of the membrane. The polypeptide is Glucans biosynthesis protein C (Escherichia coli O139:H28 (strain E24377A / ETEC)).